The sequence spans 388 residues: Flap endonuclease 1 (388 aa).

The interval methionine 1–arginine 104 is N-domain. Aspartate 34 provides a ligand contact to Mg(2+). DNA is bound by residues arginine 47 and arginine 70. Mg(2+) contacts are provided by aspartate 86, glutamate 158, glutamate 160, aspartate 179, and aspartate 181. Positions glutamine 122 to tyrosine 253 are I-domain. Residue glutamate 158 coordinates DNA. Residues glycine 231 and aspartate 233 each contribute to the DNA site. Aspartate 233 is a binding site for Mg(2+). Positions threonine 336–phenylalanine 344 are interaction with PCNA. The interval alanine 355–lysine 388 is disordered.

Belongs to the XPG/RAD2 endonuclease family. FEN1 subfamily. As to quaternary structure, interacts with PCNA. Three molecules of FEN1 bind to one PCNA trimer with each molecule binding to one PCNA monomer. PCNA stimulates the nuclease activity without altering cleavage specificity. It depends on Mg(2+) as a cofactor. Post-translationally, phosphorylated. Phosphorylation upon DNA damage induces relocalization to the nuclear plasma.

The protein resides in the nucleus. The protein localises to the nucleolus. It localises to the nucleoplasm. Its subcellular location is the mitochondrion. Structure-specific nuclease with 5'-flap endonuclease and 5'-3' exonuclease activities involved in DNA replication and repair. During DNA replication, cleaves the 5'-overhanging flap structure that is generated by displacement synthesis when DNA polymerase encounters the 5'-end of a downstream Okazaki fragment. It enters the flap from the 5'-end and then tracks to cleave the flap base, leaving a nick for ligation. Also involved in the long patch base excision repair (LP-BER) pathway, by cleaving within the apurinic/apyrimidinic (AP) site-terminated flap. Acts as a genome stabilization factor that prevents flaps from equilibrating into structures that lead to duplications and deletions. Also possesses 5'-3' exonuclease activity on nicked or gapped double-stranded DNA, and exhibits RNase H activity. Also involved in replication and repair of rDNA and in repairing mitochondrial DNA. In Drosophila grimshawi (Hawaiian fruit fly), this protein is Flap endonuclease 1.